We begin with the raw amino-acid sequence, 246 residues long: Sortase B (246 aa).

The helical transmembrane segment at 5 to 24 (SFLGKSLTLVVLGVFLFSGW) threads the bilayer.

The protein belongs to the bacterial sortase family. Class B subfamily.

The protein resides in the cell membrane. In terms of biological role, transpeptidase that anchors surface proteins to the cell wall. Recognizes and modifies its substrate by proteolytic cleavage of a C-terminal sorting signal. Following cleavage, a covalent intermediate is formed via a thioester bond between the sortase and its substrate, which is then transferred and covalently attached to the cell wall. Catalyzes a cell wall sorting reaction in which a surface protein with the consensus sorting signal NP(Q/K)(T/S)(N/G/S)(D/A) is cleaved between the fourth and fifth residues, and the fourth position is linked to the cell wall. This is not the major sortase in Listeria, it seems to anchor only 2 proteins, Hbp2 (SvpA) and Hbp1. This Listeria monocytogenes serovar 1/2a (strain ATCC BAA-679 / EGD-e) protein is Sortase B.